Reading from the N-terminus, the 139-residue chain is Ribonuclease VapC3 (139 aa).

A PINc domain is found at 14 to 121 (EAIVLDTGAF…VATDDYTLQR (108 aa)). A Mg(2+)-binding site is contributed by D19.

This sequence belongs to the PINc/VapC protein family. Requires Mg(2+) as cofactor.

Its function is as follows. Toxic component of a type II toxin-antitoxin (TA) system. An RNase. This chain is Ribonuclease VapC3, found in Aeropyrum pernix (strain ATCC 700893 / DSM 11879 / JCM 9820 / NBRC 100138 / K1).